A 315-amino-acid chain; its full sequence is Thioredoxin reductase (315 aa).

Position 45-52 (45-52 (EGSTPGGK)) interacts with FAD. Cys-145 and Cys-148 are oxidised to a cystine. 288-297 (DCRSKHFRQI) serves as a coordination point for FAD.

The protein belongs to the class-II pyridine nucleotide-disulfide oxidoreductase family. As to quaternary structure, homodimer. FAD is required as a cofactor.

The protein localises to the cytoplasm. It carries out the reaction [thioredoxin]-dithiol + NADP(+) = [thioredoxin]-disulfide + NADPH + H(+). This is Thioredoxin reductase (trxB) from Mycoplasma pneumoniae (strain ATCC 29342 / M129 / Subtype 1) (Mycoplasmoides pneumoniae).